Reading from the N-terminus, the 156-residue chain is Transthyretin-like protein 1 (156 aa).

An N-terminal signal peptide occupies residues 1–17; that stretch reads MKIALSFLFLTSTFSNA. Residue N151 is glycosylated (N-linked (GlcNAc...) asparagine).

This sequence belongs to the nematode transthyretin-like family.

Its subcellular location is the secreted. In Caenorhabditis elegans, this protein is Transthyretin-like protein 1 (ttr-1).